A 301-amino-acid chain; its full sequence is Tyrosine recombinase XerC (301 aa).

Residues 2–84 (TNTQFYITNF…TLRSFFSYLY (83 aa)) form the Core-binding (CB) domain. In terms of domain architecture, Tyr recombinase spans 105–291 (ALPKFLTVDD…DLKHLIEVYD (187 aa)). Active-site residues include Arg145, Lys169, His243, Arg246, and His269. Tyr278 acts as the O-(3'-phospho-DNA)-tyrosine intermediate in catalysis.

It belongs to the 'phage' integrase family. XerC subfamily. Forms a cyclic heterotetrameric complex composed of two molecules of XerC and two molecules of XerD.

The protein localises to the cytoplasm. Its function is as follows. Site-specific tyrosine recombinase, which acts by catalyzing the cutting and rejoining of the recombining DNA molecules. The XerC-XerD complex is essential to convert dimers of the bacterial chromosome into monomers to permit their segregation at cell division. It also contributes to the segregational stability of plasmids. The sequence is that of Tyrosine recombinase XerC from Thermodesulfovibrio yellowstonii (strain ATCC 51303 / DSM 11347 / YP87).